The following is a 301-amino-acid chain: Ribosomal RNA small subunit methyltransferase H (301 aa).

Residues 25 to 27, aspartate 45, phenylalanine 72, aspartate 94, and glutamine 101 contribute to the S-adenosyl-L-methionine site; that span reads GGH.

This sequence belongs to the methyltransferase superfamily. RsmH family.

It localises to the cytoplasm. The catalysed reaction is cytidine(1402) in 16S rRNA + S-adenosyl-L-methionine = N(4)-methylcytidine(1402) in 16S rRNA + S-adenosyl-L-homocysteine + H(+). Its function is as follows. Specifically methylates the N4 position of cytidine in position 1402 (C1402) of 16S rRNA. This chain is Ribosomal RNA small subunit methyltransferase H, found in Methylococcus capsulatus (strain ATCC 33009 / NCIMB 11132 / Bath).